The chain runs to 359 residues: UPF0283 membrane protein RHE_CH02332 (359 aa).

The disordered stretch occupies residues 1–61 (MSKPPSDLPR…EDPFINPDRD (61 aa)). 2 helical membrane passes run 77 to 97 (FGKI…GLWT) and 111 to 131 (LGYA…ALVI).

This sequence belongs to the UPF0283 family.

The protein localises to the cell inner membrane. The sequence is that of UPF0283 membrane protein RHE_CH02332 from Rhizobium etli (strain ATCC 51251 / DSM 11541 / JCM 21823 / NBRC 15573 / CFN 42).